A 365-amino-acid polypeptide reads, in one-letter code: 3,4-dihydroxy-2-butanone 4-phosphate synthase (365 aa).

The tract at residues 1–201 (MALNTIDELI…IADLIHYRLI (201 aa)) is DHBP synthase. D-ribulose 5-phosphate-binding positions include 27 to 28 (RE), Asp32, 140 to 144 (RAGHT), and Glu164. A Mg(2+)-binding site is contributed by Glu28. His143 contributes to the Mg(2+) binding site. The tract at residues 202–365 (HERTVERIAE…LEVVEYLPAE (164 aa)) is GTP cyclohydrolase II-like.

In the N-terminal section; belongs to the DHBP synthase family. The protein in the C-terminal section; belongs to the GTP cyclohydrolase II family. The cofactor is Mg(2+). Requires Mn(2+) as cofactor.

The catalysed reaction is D-ribulose 5-phosphate = (2S)-2-hydroxy-3-oxobutyl phosphate + formate + H(+). It functions in the pathway cofactor biosynthesis; riboflavin biosynthesis; 2-hydroxy-3-oxobutyl phosphate from D-ribulose 5-phosphate: step 1/1. Its function is as follows. Catalyzes the conversion of D-ribulose 5-phosphate to formate and 3,4-dihydroxy-2-butanone 4-phosphate. This chain is 3,4-dihydroxy-2-butanone 4-phosphate synthase (ribB), found in Pseudomonas aeruginosa (strain ATCC 15692 / DSM 22644 / CIP 104116 / JCM 14847 / LMG 12228 / 1C / PRS 101 / PAO1).